We begin with the raw amino-acid sequence, 452 residues long: Probable phosphoglucosamine mutase (452 aa).

Serine 96 acts as the Phosphoserine intermediate in catalysis. Residues serine 96, aspartate 233, aspartate 235, and aspartate 237 each coordinate Mg(2+). The residue at position 96 (serine 96) is a Phosphoserine.

Belongs to the phosphohexose mutase family. Mg(2+) serves as cofactor. Post-translationally, activated by phosphorylation.

The enzyme catalyses alpha-D-glucosamine 1-phosphate = D-glucosamine 6-phosphate. Its function is as follows. Catalyzes the conversion of glucosamine-6-phosphate to glucosamine-1-phosphate. This Pyrococcus furiosus (strain ATCC 43587 / DSM 3638 / JCM 8422 / Vc1) protein is Probable phosphoglucosamine mutase.